A 361-amino-acid chain; its full sequence is Histidinol-phosphate aminotransferase (361 aa).

Position 219 is an N6-(pyridoxal phosphate)lysine (lysine 219).

This sequence belongs to the class-II pyridoxal-phosphate-dependent aminotransferase family. Histidinol-phosphate aminotransferase subfamily. Homodimer. Pyridoxal 5'-phosphate serves as cofactor.

It carries out the reaction L-histidinol phosphate + 2-oxoglutarate = 3-(imidazol-4-yl)-2-oxopropyl phosphate + L-glutamate. Its pathway is amino-acid biosynthesis; L-histidine biosynthesis; L-histidine from 5-phospho-alpha-D-ribose 1-diphosphate: step 7/9. The chain is Histidinol-phosphate aminotransferase from Acinetobacter baumannii (strain AB307-0294).